The chain runs to 153 residues: Actin-related protein 2/3 complex subunit 5-like protein (153 aa).

Ser64 carries the phosphoserine modification.

This sequence belongs to the ARPC5 family. In terms of assembly, may be a component of the Arp2/3 complex in which it may replace ARPC5.

The protein localises to the cytoplasm. Its subcellular location is the cytoskeleton. In terms of biological role, may function as component of the Arp2/3 complex which is involved in regulation of actin polymerization and together with an activating nucleation-promoting factor (NPF) mediates the formation of branched actin networks. This Mus musculus (Mouse) protein is Actin-related protein 2/3 complex subunit 5-like protein (Arpc5l).